The primary structure comprises 435 residues: Serine--tRNA ligase (435 aa).

242–244 lines the L-serine pocket; the sequence is TAE. ATP is bound at residue 273 to 275; it reads RSE. Position 296 (Glu-296) interacts with L-serine. Position 360 to 363 (360 to 363) interacts with ATP; it reads EISS. Position 396 (Ser-396) interacts with L-serine.

Belongs to the class-II aminoacyl-tRNA synthetase family. Type-1 seryl-tRNA synthetase subfamily. Homodimer. The tRNA molecule binds across the dimer.

The protein resides in the cytoplasm. The enzyme catalyses tRNA(Ser) + L-serine + ATP = L-seryl-tRNA(Ser) + AMP + diphosphate + H(+). The catalysed reaction is tRNA(Sec) + L-serine + ATP = L-seryl-tRNA(Sec) + AMP + diphosphate + H(+). It participates in aminoacyl-tRNA biosynthesis; selenocysteinyl-tRNA(Sec) biosynthesis; L-seryl-tRNA(Sec) from L-serine and tRNA(Sec): step 1/1. Catalyzes the attachment of serine to tRNA(Ser). Is also able to aminoacylate tRNA(Sec) with serine, to form the misacylated tRNA L-seryl-tRNA(Sec), which will be further converted into selenocysteinyl-tRNA(Sec). This Vibrio cholerae serotype O1 (strain ATCC 39541 / Classical Ogawa 395 / O395) protein is Serine--tRNA ligase.